The sequence spans 295 residues: Protoheme IX farnesyltransferase 2 (295 aa).

Helical transmembrane passes span 9-29 (ITKP…FFLA), 36-56 (FALF…GCVF), 83-103 (LPLA…LLYV), 108-128 (LSAF…SLWL), 135-155 (GTLV…CAVS), 163-183 (VTLL…IAIF), 209-229 (IVLY…GGYA), 230-250 (GLGY…MAWG), and 264-284 (VFGF…VDSQ).

It belongs to the UbiA prenyltransferase family. Protoheme IX farnesyltransferase subfamily.

It is found in the cell inner membrane. It catalyses the reaction heme b + (2E,6E)-farnesyl diphosphate + H2O = Fe(II)-heme o + diphosphate. The protein operates within porphyrin-containing compound metabolism; heme O biosynthesis; heme O from protoheme: step 1/1. Converts heme B (protoheme IX) to heme O by substitution of the vinyl group on carbon 2 of heme B porphyrin ring with a hydroxyethyl farnesyl side group. The protein is Protoheme IX farnesyltransferase 2 of Pseudomonas putida (strain ATCC 47054 / DSM 6125 / CFBP 8728 / NCIMB 11950 / KT2440).